Here is a 287-residue protein sequence, read N- to C-terminus: Putative sugar uptake protein M6_Spy1874 (287 aa).

The next 10 membrane-spanning stretches (helical) occupy residues 4–26 (IFYA…KIGG), 33–50 (LGMT…WLIV), 55–72 (TLQL…WSIG), 85–107 (VSVA…GVLV), 117–134 (FVVG…FYFS), 154–171 (FRAL…AVLF), 181–200 (SVIL…FMSF), 207–229 (YVIK…LLAA), 234–256 (LAIA…ILFL), and 268–285 (VVTG…LGVV).

Belongs to the GRP transporter (TC 2.A.7.5) family.

The protein resides in the cell membrane. The chain is Putative sugar uptake protein M6_Spy1874 from Streptococcus pyogenes serotype M6 (strain ATCC BAA-946 / MGAS10394).